Here is a 483-residue protein sequence, read N- to C-terminus: BTB/POZ domain and ankyrin repeat-containing protein NBCL (483 aa).

The 85-residue stretch at 25 to 109 folds into the BTB domain; the sequence is SDVTFSVEGR…LYSGQVSIVP (85 aa). The C2HC NPR-type zinc finger occupies 115–129; that stretch reads RPNCGERACWHTHCT. Positions 118, 123, 125, and 128 each coordinate Zn(2+). ANK repeat units lie at residues 254 to 283, 284 to 313, 318 to 347, and 351 to 385; these read QKIR…LNLD, EALA…DVNY, SGKT…DPNV, and DGVT…KLRL. The interval 401 to 437 is disordered; it reads EGNANANSSNNNNAPCSAATPIYPPMNEDHNSSSSNA. Residues 403 to 419 are compositionally biased toward low complexity; it reads NANANSSNNNNAPCSAA.

The protein belongs to the plant 'ANKYRIN-BTB/POZ' family. 'NOOT-BOP-COCH-like' (NBCL) subfamily. In terms of assembly, homodimer. Interacts with APP1 around the plasma membrane and in the nucleus; this interaction disturbs APP1-mediated regulation of the nuclear transcription factor Y subunit (NF-YA1). As to expression, mainly expressed in root nodules, to a lesser extent in shoot apical meristems (SAM) and root meristems (RM), and barely in leaves, non-nodulating roots and root apical meristems (RAM).

The protein resides in the nucleus. Its subcellular location is the cytoplasm. It is found in the cell membrane. It functions in the pathway protein modification; protein ubiquitination. May act as a substrate-specific adapter of an E3 ubiquitin-protein ligase complex (CUL3-RBX1-BTB) which mediates the ubiquitination and subsequent proteasomal degradation of target proteins. Transcriptional co-regulator involved in the promotion of leaf and floral meristem fate and determinacy. Required for the abscission of senescent organs, probably by regulating the cell wall disorganization in abscission zones (AZs, e.g. pulvini at the base of leaves). Involved in the coordination of the symbiotic nodule developmental program; promotes the formation of root nodules by interacting directly with APP1 to modulate the expression of the nuclear transcription factor Y subunit (NF-YA1), a key nodulin. Necessary for the robust maintenance of nodule identity throughout the nodule developmental program. In Lotus japonicus (Lotus corniculatus var. japonicus), this protein is BTB/POZ domain and ankyrin repeat-containing protein NBCL.